The chain runs to 401 residues: Dual-specificity RNA methyltransferase RlmN (401 aa).

E114 acts as the Proton acceptor in catalysis. The Radical SAM core domain maps to 120-365 (DKGRGTLCVS…TMVRRTRGDD (246 aa)). A disulfide bridge links C127 with C370. Residues C134, C138, and C141 each coordinate [4Fe-4S] cluster. Residues 187 to 188 (GE), S219, 241 to 243 (SLH), and N327 each bind S-adenosyl-L-methionine. Catalysis depends on C370, which acts as the S-methylcysteine intermediate.

The protein belongs to the radical SAM superfamily. RlmN family. Requires [4Fe-4S] cluster as cofactor.

Its subcellular location is the cytoplasm. It carries out the reaction adenosine(2503) in 23S rRNA + 2 reduced [2Fe-2S]-[ferredoxin] + 2 S-adenosyl-L-methionine = 2-methyladenosine(2503) in 23S rRNA + 5'-deoxyadenosine + L-methionine + 2 oxidized [2Fe-2S]-[ferredoxin] + S-adenosyl-L-homocysteine. The catalysed reaction is adenosine(37) in tRNA + 2 reduced [2Fe-2S]-[ferredoxin] + 2 S-adenosyl-L-methionine = 2-methyladenosine(37) in tRNA + 5'-deoxyadenosine + L-methionine + 2 oxidized [2Fe-2S]-[ferredoxin] + S-adenosyl-L-homocysteine. In terms of biological role, specifically methylates position 2 of adenine 2503 in 23S rRNA and position 2 of adenine 37 in tRNAs. m2A2503 modification seems to play a crucial role in the proofreading step occurring at the peptidyl transferase center and thus would serve to optimize ribosomal fidelity. This chain is Dual-specificity RNA methyltransferase RlmN, found in Xanthomonas axonopodis pv. citri (strain 306).